We begin with the raw amino-acid sequence, 241 residues long: MYSMRVVIEETDVTIRADSKESVSSAAKAVKLHRSELDRYVAKDPAFVTAKVPVRTLEGAPEVAKLMSRAAEPFGVGPMAAVAGAIAELAARASEPTVIVDNGGDVQVRARRSVVVGLYVSDDHPLSGRIGFEIEGVLGVCTSSGKFGHSYSAGKADAVTVFAERASLADAAATAICNLTSGDDPEAAVQRALEFADDFTGDLIEAAVVIRGDFVGISGRPPKIVSLRGGRIKPARLEPTI.

This sequence belongs to the UPF0280 family.

The sequence is that of UPF0280 protein MK0206 from Methanopyrus kandleri (strain AV19 / DSM 6324 / JCM 9639 / NBRC 100938).